The following is a 610-amino-acid chain: Lipoprotein LpqB (610 aa).

An N-terminal signal peptide occupies residues 1 to 27; the sequence is MGAEGGGRRRALRLGAYVGCGAVLLTG. Residue C28 is the site of N-palmitoyl cysteine attachment. Residue C28 is the site of S-diacylglycerol cysteine attachment.

It belongs to the LpqB lipoprotein family.

The protein resides in the cell membrane. This chain is Lipoprotein LpqB, found in Streptomyces avermitilis (strain ATCC 31267 / DSM 46492 / JCM 5070 / NBRC 14893 / NCIMB 12804 / NRRL 8165 / MA-4680).